Reading from the N-terminus, the 201-residue chain is Recombination protein RecR (201 aa).

The C4-type zinc finger occupies 60-75 (CSVCGNVDTIDPCSIC). The Toprim domain occupies 83-178 (ATIIVVEDIA…KVTRLAHGVP (96 aa)).

This sequence belongs to the RecR family.

Its function is as follows. May play a role in DNA repair. It seems to be involved in an RecBC-independent recombinational process of DNA repair. It may act with RecF and RecO. The chain is Recombination protein RecR from Bartonella henselae (strain ATCC 49882 / DSM 28221 / CCUG 30454 / Houston 1) (Rochalimaea henselae).